The sequence spans 420 residues: Acetyl-CoA acetyltransferase A, mitochondrial (420 aa).

The transit peptide at 1 to 33 (MAFCGTRTAARLSHSTRALHNTHRNFASQRTLN) directs the protein to the mitochondrion. Catalysis depends on Cys-119, which acts as the Acyl-thioester intermediate. Residues Tyr-212, 251–253 (RVD), and Lys-256 each bind CoA. Tyr-212 provides a ligand contact to K(+). K(+)-binding residues include Ala-273 and Ala-274. Ser-277 provides a ligand contact to CoA. A K(+)-binding site is contributed by Val-374. The active-site Proton donor/acceptor is Cys-406.

It belongs to the thiolase-like superfamily. Thiolase family. Homotetramer.

It is found in the mitochondrion. It catalyses the reaction 2 acetyl-CoA = acetoacetyl-CoA + CoA. The enzyme catalyses propanoyl-CoA + acetyl-CoA = 2-methyl-3-oxobutanoyl-CoA + CoA. It participates in lipid metabolism; fatty acid beta-oxidation. Functionally, this is one of the enzymes that catalyzes the last step of the mitochondrial beta-oxidation pathway, an aerobic process breaking down fatty acids into acetyl-CoA. Using free coenzyme A/CoA, catalyzes the thiolytic cleavage of medium- to long-chain 3-oxoacyl-CoAs into acetyl-CoA and a fatty acyl-CoA shortened by two carbon atoms. The activity of the enzyme is reversible and it can also catalyze the condensation of two acetyl-CoA molecules into acetoacetyl-CoA. Thereby, it plays a major role in ketone body metabolism. The chain is Acetyl-CoA acetyltransferase A, mitochondrial (acat1-a) from Xenopus laevis (African clawed frog).